Consider the following 508-residue polypeptide: Glycerol kinase (508 aa).

Residue T14 coordinates ADP. 3 residues coordinate ATP: T14, T15, and S16. T14 provides a ligand contact to sn-glycerol 3-phosphate. Position 18 (R18) interacts with ADP. Residues R84, E85, and Y136 each coordinate sn-glycerol 3-phosphate. Residues R84, E85, and Y136 each coordinate glycerol. H232 carries the post-translational modification Phosphohistidine; by HPr. D246 is a binding site for sn-glycerol 3-phosphate. Glycerol-binding residues include D246 and Q247. 2 residues coordinate ADP: T268 and G311. ATP contacts are provided by T268, G311, Q315, and G412. Residues G412 and N416 each contribute to the ADP site.

Belongs to the FGGY kinase family. As to quaternary structure, homotetramer and homodimer (in equilibrium). The phosphoenolpyruvate-dependent sugar phosphotransferase system (PTS), including enzyme I, and histidine-containing protein (HPr) are required for the phosphorylation, which leads to the activation of the enzyme.

The catalysed reaction is glycerol + ATP = sn-glycerol 3-phosphate + ADP + H(+). It functions in the pathway polyol metabolism; glycerol degradation via glycerol kinase pathway; sn-glycerol 3-phosphate from glycerol: step 1/1. Activated by phosphorylation and inhibited by fructose 1,6-bisphosphate (FBP). Key enzyme in the regulation of glycerol uptake and metabolism. Catalyzes the phosphorylation of glycerol to yield sn-glycerol 3-phosphate. The sequence is that of Glycerol kinase from Streptococcus pyogenes serotype M28 (strain MGAS6180).